A 631-amino-acid chain; its full sequence is tRNA uridine 5-carboxymethylaminomethyl modification enzyme MnmG (631 aa).

FAD-binding positions include 13–18, V125, and S180; that span reads GGGHAG. An NAD(+)-binding site is contributed by 273-287; that stretch reads GPRYCPSIEDKVNRY. Position 370 (Q370) interacts with FAD.

This sequence belongs to the MnmG family. In terms of assembly, homodimer. Heterotetramer of two MnmE and two MnmG subunits. It depends on FAD as a cofactor.

It localises to the cytoplasm. NAD-binding protein involved in the addition of a carboxymethylaminomethyl (cmnm) group at the wobble position (U34) of certain tRNAs, forming tRNA-cmnm(5)s(2)U34. In Alcanivorax borkumensis (strain ATCC 700651 / DSM 11573 / NCIMB 13689 / SK2), this protein is tRNA uridine 5-carboxymethylaminomethyl modification enzyme MnmG.